Here is a 489-residue protein sequence, read N- to C-terminus: Protein DETOXIFICATION 26 (489 aa).

The next 12 membrane-spanning stretches (helical) occupy residues 42-62 (IWYI…ILII), 75-95 (LAAI…LLLG), 125-145 (IILF…TPIL), 157-177 (LTGT…FFFP), 190-210 (VIAI…WFFV), 217-237 (IIGT…ILFL), 271-291 (IMLC…GNLV), 300-320 (LSIC…FFAG), 342-362 (IVSI…IVIF), 385-405 (VLLA…GVAV), 416-436 (INLG…GWIF), and 442-462 (GIWA…LIII).

The protein belongs to the multi antimicrobial extrusion (MATE) (TC 2.A.66.1) family.

It localises to the membrane. The chain is Protein DETOXIFICATION 26 from Arabidopsis thaliana (Mouse-ear cress).